The sequence spans 258 residues: UPF0246 protein YaaA (258 aa).

This sequence belongs to the UPF0246 family.

The protein is UPF0246 protein YaaA of Shigella sonnei (strain Ss046).